Reading from the N-terminus, the 488-residue chain is Glycogen synthase (488 aa).

K16 provides a ligand contact to ADP-alpha-D-glucose.

Belongs to the glycosyltransferase 1 family. Bacterial/plant glycogen synthase subfamily.

The enzyme catalyses [(1-&gt;4)-alpha-D-glucosyl](n) + ADP-alpha-D-glucose = [(1-&gt;4)-alpha-D-glucosyl](n+1) + ADP + H(+). It participates in glycan biosynthesis; glycogen biosynthesis. Synthesizes alpha-1,4-glucan chains using ADP-glucose. This chain is Glycogen synthase, found in Marinobacter nauticus (strain ATCC 700491 / DSM 11845 / VT8) (Marinobacter aquaeolei).